We begin with the raw amino-acid sequence, 240 residues long: B-cell receptor-associated protein 29 (240 aa).

The Lumenal segment spans residues 1-6 (MTLQWT). A helical membrane pass occupies residues 7–27 (AVATFLYAEIGLILIFCLPFI). The Cytoplasmic portion of the chain corresponds to 28-43 (PPQRWQKIFSFSVWGK). The helical transmembrane segment at 44–64 (IASFWNKAFLTIIILLIVLFL) threads the bilayer. Topologically, residues 65-103 (DAVREVRKYSSTHTIEKSSASRPAAYEHTQMKLFRSQRN) are lumenal. The helical transmembrane segment at 104–124 (LYISGFSLFFWLVLRRLVTLI) threads the bilayer. Topologically, residues 125 to 240 (TQLAKELSHK…DRAGKDKKCL (116 aa)) are cytoplasmic. Positions 166-233 (GKEEEHILEA…REHSELQDRA (68 aa)) form a coiled coil. The short motif at 237–240 (KKCL) is the Di-lysine motif element.

Belongs to the BCAP29/BCAP31 family. Homodimer and heterodimer with BCAP31. Binds CASP8 as a complex containing BCAP31, BCAP29, BCL2 and/or BCL2L1. Interacts with VAMP3, VAMP1 and membrane IgD immunoglobulins. May interact with ACTG1 and non-muscle myosin II.

Its subcellular location is the endoplasmic reticulum membrane. Its function is as follows. May play a role in anterograde transport of membrane proteins from the endoplasmic reticulum to the Golgi. May be involved in CASP8-mediated apoptosis. The protein is B-cell receptor-associated protein 29 (BCAP29) of Bos taurus (Bovine).